Here is a 1165-residue protein sequence, read N- to C-terminus: ATP-dependent helicase/deoxyribonuclease subunit B (1165 aa).

A UvrD-like helicase ATP-binding domain is found at 1–298 (MALRFILGRA…AHLEREFFRR (298 aa)). Residue 8 to 15 (GRAGTGKT) coordinates ATP. Residues 279 to 584 (PARFRANPAL…QLALIPPALD (306 aa)) enclose the UvrD-like helicase C-terminal domain. C800, C1119, C1122, and C1128 together coordinate [4Fe-4S] cluster.

The protein belongs to the helicase family. AddB/RexB type 1 subfamily. In terms of assembly, heterodimer of AddA and AddB. Mg(2+) serves as cofactor. It depends on [4Fe-4S] cluster as a cofactor.

Its function is as follows. The heterodimer acts as both an ATP-dependent DNA helicase and an ATP-dependent, dual-direction single-stranded exonuclease. Recognizes the chi site generating a DNA molecule suitable for the initiation of homologous recombination. The AddB subunit has 5' -&gt; 3' nuclease activity but not helicase activity. This chain is ATP-dependent helicase/deoxyribonuclease subunit B, found in Desulforudis audaxviator (strain MP104C).